Consider the following 140-residue polypeptide: Ribonuclease P protein component (140 aa).

The protein belongs to the RnpA family. In terms of assembly, consists of a catalytic RNA component (M1 or rnpB) and a protein subunit.

It catalyses the reaction Endonucleolytic cleavage of RNA, removing 5'-extranucleotides from tRNA precursor.. In terms of biological role, RNaseP catalyzes the removal of the 5'-leader sequence from pre-tRNA to produce the mature 5'-terminus. It can also cleave other RNA substrates such as 4.5S RNA. The protein component plays an auxiliary but essential role in vivo by binding to the 5'-leader sequence and broadening the substrate specificity of the ribozyme. This is Ribonuclease P protein component from Nostoc punctiforme (strain ATCC 29133 / PCC 73102).